Reading from the N-terminus, the 128-residue chain is Holo-[acyl-carrier-protein] synthase (128 aa).

Mg(2+) is bound by residues D8 and E58.

Belongs to the P-Pant transferase superfamily. AcpS family. Mg(2+) is required as a cofactor.

The protein localises to the cytoplasm. It carries out the reaction apo-[ACP] + CoA = holo-[ACP] + adenosine 3',5'-bisphosphate + H(+). Functionally, transfers the 4'-phosphopantetheine moiety from coenzyme A to a Ser of acyl-carrier-protein. This is Holo-[acyl-carrier-protein] synthase from Exiguobacterium sibiricum (strain DSM 17290 / CCUG 55495 / CIP 109462 / JCM 13490 / 255-15).